The sequence spans 458 residues: Bifunctional protein GlmU (458 aa).

A pyrophosphorylase region spans residues 1 to 232; it reads MTSSLSVIIL…TFEIEGVNNR (232 aa). Residues 10–13, Lys24, Gln79, 84–85, 106–108, Gly142, Glu157, Asn172, and Asn230 contribute to the UDP-N-acetyl-alpha-D-glucosamine site; these read LAAG, GT, and YGD. A Mg(2+)-binding site is contributed by Asp108. Asn230 is a Mg(2+) binding site. Residues 233-253 form a linker region; it reads QQLASLERTWQGKLVADLQEA. Residues 254–458 form an N-acetyltransferase region; that stretch reads GVQFADPTRV…KNDFKRPTKK (205 aa). The UDP-N-acetyl-alpha-D-glucosamine site is built by Arg336 and Lys354. Catalysis depends on His366, which acts as the Proton acceptor. UDP-N-acetyl-alpha-D-glucosamine-binding residues include Tyr369 and Asn380. Acetyl-CoA-binding positions include Ala383, 389–390, Ser408, Ala426, and Arg443; that span reads NY.

This sequence in the N-terminal section; belongs to the N-acetylglucosamine-1-phosphate uridyltransferase family. The protein in the C-terminal section; belongs to the transferase hexapeptide repeat family. Homotrimer. Requires Mg(2+) as cofactor.

Its subcellular location is the cytoplasm. The enzyme catalyses alpha-D-glucosamine 1-phosphate + acetyl-CoA = N-acetyl-alpha-D-glucosamine 1-phosphate + CoA + H(+). The catalysed reaction is N-acetyl-alpha-D-glucosamine 1-phosphate + UTP + H(+) = UDP-N-acetyl-alpha-D-glucosamine + diphosphate. It functions in the pathway nucleotide-sugar biosynthesis; UDP-N-acetyl-alpha-D-glucosamine biosynthesis; N-acetyl-alpha-D-glucosamine 1-phosphate from alpha-D-glucosamine 6-phosphate (route II): step 2/2. Its pathway is nucleotide-sugar biosynthesis; UDP-N-acetyl-alpha-D-glucosamine biosynthesis; UDP-N-acetyl-alpha-D-glucosamine from N-acetyl-alpha-D-glucosamine 1-phosphate: step 1/1. It participates in bacterial outer membrane biogenesis; LPS lipid A biosynthesis. Catalyzes the last two sequential reactions in the de novo biosynthetic pathway for UDP-N-acetylglucosamine (UDP-GlcNAc). The C-terminal domain catalyzes the transfer of acetyl group from acetyl coenzyme A to glucosamine-1-phosphate (GlcN-1-P) to produce N-acetylglucosamine-1-phosphate (GlcNAc-1-P), which is converted into UDP-GlcNAc by the transfer of uridine 5-monophosphate (from uridine 5-triphosphate), a reaction catalyzed by the N-terminal domain. The sequence is that of Bifunctional protein GlmU from Psychrobacter cryohalolentis (strain ATCC BAA-1226 / DSM 17306 / VKM B-2378 / K5).